Consider the following 441-residue polypeptide: UDP-N-acetylmuramoylalanine--D-glutamate ligase (441 aa).

Residue 129-135 (GTNGKST) participates in ATP binding.

It belongs to the MurCDEF family.

The protein localises to the cytoplasm. The catalysed reaction is UDP-N-acetyl-alpha-D-muramoyl-L-alanine + D-glutamate + ATP = UDP-N-acetyl-alpha-D-muramoyl-L-alanyl-D-glutamate + ADP + phosphate + H(+). It functions in the pathway cell wall biogenesis; peptidoglycan biosynthesis. Cell wall formation. Catalyzes the addition of glutamate to the nucleotide precursor UDP-N-acetylmuramoyl-L-alanine (UMA). The polypeptide is UDP-N-acetylmuramoylalanine--D-glutamate ligase (Zymomonas mobilis subsp. mobilis (strain ATCC 31821 / ZM4 / CP4)).